We begin with the raw amino-acid sequence, 158 residues long: Large ribosomal subunit protein eL20z (158 aa).

This sequence belongs to the eukaryotic ribosomal protein eL20 family.

The polypeptide is Large ribosomal subunit protein eL20z (RPL18A1) (Arabidopsis thaliana (Mouse-ear cress)).